The sequence spans 150 residues: Snaclec 7 (150 aa).

The first 23 residues, 1 to 23, serve as a signal peptide directing secretion; that stretch reads MGRFISISFGLLVVFLSLSGTGA. Intrachain disulfides connect cysteine 27/cysteine 38, cysteine 55/cysteine 144, and cysteine 121/cysteine 136. Positions 34-145 constitute a C-type lectin domain; sequence YEGYCYKVFN…CNDPRYFVCK (112 aa).

This sequence belongs to the snaclec family. In terms of assembly, heterodimer; disulfide-linked.

Its subcellular location is the secreted. Its function is as follows. Interferes with one step of hemostasis (modulation of platelet aggregation, or coagulation cascade, for example). The protein is Snaclec 7 of Daboia siamensis (Eastern Russel's viper).